A 220-amino-acid chain; its full sequence is Translation initiation factor 6 (220 aa).

This sequence belongs to the eIF-6 family.

Binds to the 50S ribosomal subunit and prevents its association with the 30S ribosomal subunit to form the 70S initiation complex. This Halobacterium salinarum (strain ATCC 29341 / DSM 671 / R1) protein is Translation initiation factor 6.